Here is a 215-residue protein sequence, read N- to C-terminus: Pyridoxine/pyridoxamine 5'-phosphate oxidase (215 aa).

Substrate contacts are provided by residues 9 to 12 and K69; that span reads RRDY. FMN contacts are provided by residues 64 to 69, 79 to 80, K86, and Q108; these read RVLLLK and FT. Residues Y126, R130, and S134 each coordinate substrate. Residues 143–144 and W188 each bind FMN; that span reads QS. Substrate is bound at residue 194 to 196; the sequence is RLH. R198 contacts FMN.

The protein belongs to the pyridoxamine 5'-phosphate oxidase family. Homodimer. It depends on FMN as a cofactor.

The catalysed reaction is pyridoxamine 5'-phosphate + O2 + H2O = pyridoxal 5'-phosphate + H2O2 + NH4(+). It carries out the reaction pyridoxine 5'-phosphate + O2 = pyridoxal 5'-phosphate + H2O2. It participates in cofactor metabolism; pyridoxal 5'-phosphate salvage; pyridoxal 5'-phosphate from pyridoxamine 5'-phosphate: step 1/1. It functions in the pathway cofactor metabolism; pyridoxal 5'-phosphate salvage; pyridoxal 5'-phosphate from pyridoxine 5'-phosphate: step 1/1. Functionally, catalyzes the oxidation of either pyridoxine 5'-phosphate (PNP) or pyridoxamine 5'-phosphate (PMP) into pyridoxal 5'-phosphate (PLP). The protein is Pyridoxine/pyridoxamine 5'-phosphate oxidase of Pseudomonas syringae pv. tomato (strain ATCC BAA-871 / DC3000).